The following is a 198-amino-acid chain: Probable thymidylate kinase (198 aa).

9-16 (GIDGSGKT) contributes to the ATP binding site.

It belongs to the thymidylate kinase family.

The catalysed reaction is dTMP + ATP = dTDP + ADP. In Methanococcus vannielii (strain ATCC 35089 / DSM 1224 / JCM 13029 / OCM 148 / SB), this protein is Probable thymidylate kinase.